We begin with the raw amino-acid sequence, 93 residues long: Putative septation protein SpoVG (93 aa).

Belongs to the SpoVG family.

Its function is as follows. Could be involved in septation. In Lachnoclostridium phytofermentans (strain ATCC 700394 / DSM 18823 / ISDg) (Clostridium phytofermentans), this protein is Putative septation protein SpoVG.